A 124-amino-acid polypeptide reads, in one-letter code: Apolipoprotein C-IV (124 aa).

The signal sequence occupies residues 1–27; sequence MSLLRCRQQTLPSLCLSVLFLACFVAS.

It belongs to the apolipoprotein C4 family.

The protein localises to the secreted. In terms of biological role, may participate in lipoprotein metabolism. The sequence is that of Apolipoprotein C-IV (Apoc4) from Rattus norvegicus (Rat).